The primary structure comprises 289 residues: Oxaloacetate decarboxylase (289 aa).

Substrate is bound at residue Ser-50. Asp-88 provides a ligand contact to Mg(2+). Substrate-binding residues include Arg-159 and His-235.

The protein belongs to the isocitrate lyase/PEP mutase superfamily. Oxaloacetate decarboxylase family. In terms of assembly, homotetramer; dimer of dimers. Mg(2+) serves as cofactor.

The catalysed reaction is oxaloacetate + H(+) = pyruvate + CO2. Functionally, catalyzes the decarboxylation of oxaloacetate into pyruvate. Seems to play a role in maintaining cellular concentrations of bicarbonate and pyruvate. The polypeptide is Oxaloacetate decarboxylase (Pseudomonas putida (strain GB-1)).